Reading from the N-terminus, the 88-residue chain is Small ribosomal subunit protein uS15 (88 aa).

The protein belongs to the universal ribosomal protein uS15 family. In terms of assembly, part of the 30S ribosomal subunit. Forms a bridge to the 50S subunit in the 70S ribosome, contacting the 23S rRNA.

Functionally, one of the primary rRNA binding proteins, it binds directly to 16S rRNA where it helps nucleate assembly of the platform of the 30S subunit by binding and bridging several RNA helices of the 16S rRNA. Forms an intersubunit bridge (bridge B4) with the 23S rRNA of the 50S subunit in the ribosome. This chain is Small ribosomal subunit protein uS15, found in Mycoplasmopsis pulmonis (strain UAB CTIP) (Mycoplasma pulmonis).